The sequence spans 165 residues: UPF0114 protein in repA1-repA2 intergenic region (165 aa).

The next 3 helical transmembrane spans lie at 10 to 32 (YASR…LLTL), 53 to 75 (LVLV…MVMF), and 134 to 156 (DQIM…MACI).

Belongs to the UPF0114 family.

Its subcellular location is the cell membrane. This chain is UPF0114 protein in repA1-repA2 intergenic region, found in Buchnera aphidicola subsp. Baizongia pistaciae (strain Bp).